The primary structure comprises 177 residues: MLSEVNKISKNFAINQEIREKEVRLISSTGEQLGVVSGRDAQRMADEAELDLVMISPNAKPPVCKIMDYGKFIYEQSKKEKEAKKKQKVISVKEIRVSPTIEKHDLEIKAKNAKKFLEAGDKVKITVRFRGREAEHSHVGVKILDSFLAQLEEVCSVEKPAKLEGRNMIMILAPKKA.

Belongs to the IF-3 family. As to quaternary structure, monomer.

The protein localises to the cytoplasm. Its function is as follows. IF-3 binds to the 30S ribosomal subunit and shifts the equilibrium between 70S ribosomes and their 50S and 30S subunits in favor of the free subunits, thus enhancing the availability of 30S subunits on which protein synthesis initiation begins. This Clostridium perfringens (strain 13 / Type A) protein is Translation initiation factor IF-3.